The primary structure comprises 118 residues: Iron-sulfur cluster insertion protein ErpA (118 aa).

3 residues coordinate iron-sulfur cluster: cysteine 46, cysteine 110, and cysteine 112.

This sequence belongs to the HesB/IscA family. In terms of assembly, homodimer. The cofactor is iron-sulfur cluster.

In terms of biological role, required for insertion of 4Fe-4S clusters for at least IspG. The chain is Iron-sulfur cluster insertion protein ErpA from Psychromonas ingrahamii (strain DSM 17664 / CCUG 51855 / 37).